The chain runs to 82 residues: uncharacterized protein (82 aa).

This is an uncharacterized protein from Archaeoglobus fulgidus (strain ATCC 49558 / DSM 4304 / JCM 9628 / NBRC 100126 / VC-16).